A 514-amino-acid chain; its full sequence is L-threonine dehydratase biosynthetic IlvA (514 aa).

The residue at position 62 (Lys62) is an N6-(pyridoxal phosphate)lysine. Residues Asn89, Gly188–Leu192, and Ser315 contribute to the pyridoxal 5'-phosphate site. 2 ACT-like domains span residues Ala339–Asp411 and Arg434–Asn504.

Belongs to the serine/threonine dehydratase family. As to quaternary structure, homotetramer. It depends on pyridoxal 5'-phosphate as a cofactor.

The enzyme catalyses L-threonine = 2-oxobutanoate + NH4(+). The protein operates within amino-acid biosynthesis; L-isoleucine biosynthesis; 2-oxobutanoate from L-threonine: step 1/1. Isoleucine allosterically inhibits whereas valine allosterically activates this enzyme. Its function is as follows. Catalyzes the anaerobic formation of alpha-ketobutyrate and ammonia from threonine in a two-step reaction. The first step involved a dehydration of threonine and a production of enamine intermediates (aminocrotonate), which tautomerizes to its imine form (iminobutyrate). Both intermediates are unstable and short-lived. The second step is the nonenzymatic hydrolysis of the enamine/imine intermediates to form 2-ketobutyrate and free ammonia. In the low water environment of the cell, the second step is accelerated by RidA. This Escherichia coli (strain K12) protein is L-threonine dehydratase biosynthetic IlvA (ilvA).